Reading from the N-terminus, the 603-residue chain is Ribosome-inactivating protein PMRIPt (603 aa).

A signal peptide spans 1–39; the sequence is MRVVAGILYIVVMAICGLGIQGGTLQDYPSVYFQDSTLQ. N-linked (GlcNAc...) asparagine glycans are attached at residues Asn-74 and Asn-168. The active site involves Glu-208. 3 cysteine pairs are disulfide-bonded: Cys-297–Cys-335, Cys-351–Cys-370, and Cys-392–Cys-409. Ricin B-type lectin domains are found at residues 338-466 and 467-593; these read GEPT…VGDD and VEPI…WMTM. Residues 348-388 form a 1-alpha repeat; it reads DGLCMDVRNESNNDGIPIQLWPCGAQRNQQWTFHTDGTIQS. N-linked (GlcNAc...) asparagine glycosylation is found at Asn-356 and Asn-408. The 1-beta repeat unit spans residues 389-430; sequence MGKCMTSNGYHPGDYVMIFNCSTAPVPDATKWVVSIDGSITN. The 1-gamma repeat unit spans residues 433–466; the sequence is SGLVLTAPQAAQTTILLVVRNTHSAKQGRSVGDD. One copy of the 2-alpha repeat lies at 478 to 516; sequence KYMCLQGNNENNTRVWLEDCAVDRPQQWWALYSDGTIRV. Intrachain disulfides connect Cys-481–Cys-497 and Cys-523–Cys-540. An N-linked (GlcNAc...) asparagine glycan is attached at Asn-488. A 2-beta repeat occupies 520-558; that stretch reads RSLCVTSDGHSSRDAIIILTCDGGINQRLVFNTDGTILN. Residues 561 to 597 form a 2-gamma repeat; that stretch reads AQLVMDVRQSNVALRQIILYQPTGNPNQQWMTMITRT.

This sequence belongs to the ribosome-inactivating protein family. Type 2 RIP subfamily. In terms of assembly, tetramer of four pairs of disulfide bound A-B chains. In terms of processing, the precursor is processed in two chains, A and B, that are linked by a disulfide bond. Glycosylated. In terms of tissue distribution, expressed in rhizome and more abundantly in leaves (at protein level).

The enzyme catalyses Endohydrolysis of the N-glycosidic bond at one specific adenosine on the 28S rRNA.. With respect to regulation, strongly inhibited by asialofetuin and asialomucin. GalNAc-specific agglutinin. Behaves as a type-2 ribosome-inactivating protein. Inhibits mammalian ribosomes. The A chain is responsible for inhibiting protein synthesis through the catalytic inactivation of 60S ribosomal subunits by removing adenine from position 4,324 of 28S rRNA. The B chain binds to cell receptors and probably facilitates the entry into the cell of the A chain; B chains are also responsible for cell agglutination (lectin activity). Involved in plant defense against insects. Has very low cytotoxic activity against the human tumor cell lines CEM and Molt4. The sequence is that of Ribosome-inactivating protein PMRIPt from Polygonatum multiflorum (Solomon's seal).